Here is a 198-residue protein sequence, read N- to C-terminus: Cytochrome c oxidase assembly protein CtaG (198 aa).

The Cytoplasmic portion of the chain corresponds to 1-12 (MADNGQADRKER). Residues 13–35 (SNGVIVGTCLAFVAGMIGMAYAA) traverse the membrane as a helical; Signal-anchor for type II membrane protein segment. Over 36-198 (VPLYDMFCRV…QVKAKAENKL (163 aa)) the chain is Periplasmic.

This sequence belongs to the COX11/CtaG family.

It is found in the cell inner membrane. Exerts its effect at some terminal stage of cytochrome c oxidase synthesis, probably by being involved in the insertion of the copper B into subunit I. The chain is Cytochrome c oxidase assembly protein CtaG from Rhizobium meliloti (strain 1021) (Ensifer meliloti).